The sequence spans 247 residues: Eukaryotic translation initiation factor 6 (247 aa).

Phosphoserine; by CK1 is present on residues S174 and S175.

The protein belongs to the eIF-6 family. Monomer. Associates with the 60S ribosomal subunit. In terms of processing, phosphorylation at Ser-174 and Ser-175 promotes nuclear export.

The protein localises to the cytoplasm. It is found in the nucleus. The protein resides in the nucleolus. Binds to the 60S ribosomal subunit and prevents its association with the 40S ribosomal subunit to form the 80S initiation complex in the cytoplasm. Is also involved in ribosome biogenesis. Associates with pre-60S subunits in the nucleus and is involved in its nuclear export. The sequence is that of Eukaryotic translation initiation factor 6 (tif6) from Aspergillus oryzae (strain ATCC 42149 / RIB 40) (Yellow koji mold).